We begin with the raw amino-acid sequence, 173 residues long: Ribosome maturation factor RimM (173 aa).

A PRC barrel domain is found at 97–170 (EHEYYYHEII…RIRVHIMEGL (74 aa)).

This sequence belongs to the RimM family. As to quaternary structure, binds ribosomal protein uS19.

It localises to the cytoplasm. Functionally, an accessory protein needed during the final step in the assembly of 30S ribosomal subunit, possibly for assembly of the head region. Essential for efficient processing of 16S rRNA. May be needed both before and after RbfA during the maturation of 16S rRNA. It has affinity for free ribosomal 30S subunits but not for 70S ribosomes. This Shouchella clausii (strain KSM-K16) (Alkalihalobacillus clausii) protein is Ribosome maturation factor RimM.